The chain runs to 114 residues: MSSMQFGAATEFSNKCGVTLMNTPIGRVVAEVMGAKEGVELTEYPSMIRVDGVKLLSFDYDELTEALGEEFDGSIFEEISSTHYGRMVHLDDKTMLFASPEDAAEYIGFDLTAK.

It belongs to the TmoD/XamoD family. In terms of assembly, the propane 2-monooxygenase multicomponent enzyme system is composed of an electron transfer component and a monooxygenase component interacting with the effector protein MimD. The electron transfer component is composed of a reductase (MimB), and the monooxygenase component is formed by a large subunit (MimA) and a small subunit (MimC).

In terms of biological role, effector component of the propane 2-monooxygenase multicomponent enzyme system which is involved in the degradation of propane via the O2-dependent hydroxylation of propane. The sequence is that of Propane 2-monooxygenase, effector component from Mycolicibacterium smegmatis (strain ATCC 700084 / mc(2)155) (Mycobacterium smegmatis).